An 858-amino-acid polypeptide reads, in one-letter code: Heat shock protein 105 kDa (858 aa).

The residue at position 2 (Ser2) is an N-acetylserine. An N6-acetyllysine modification is found at Lys471. 2 disordered regions span residues 500–584 (KVPT…PPEA) and 796–858 (CEPV…MDLD). Over residues 504-514 (EENEMSSEADM) the composition is skewed to acidic residues. Phosphoserine occurs at positions 509 and 510. Residues 532-554 (QQDNSEAGTQPQVQTDAQQTSQS) show a composition bias toward polar residues. At Ser557 the chain carries Phosphoserine. At Thr561 the chain carries Phosphothreonine. 2 stretches are compositionally biased toward basic and acidic residues: residues 563–584 (EENKIPDADKANEKKVDQPPEA) and 805–814 (PKIESPKLER). Phosphoserine is present on Ser809. Position 815 is a phosphothreonine (Thr815). A compositionally biased stretch (basic and acidic residues) spans 821-832 (IDKKEEDLEDKN). Positions 849–858 (EKNSVNMDLD) are enriched in polar residues.

This sequence belongs to the heat shock protein 70 family. Interacts with HSPA8/HSC70. Interacts with HSPA1A (via NBD) and HSPA1B (via NBD). Phosphorylation on Ser-509 may be important for regulation of the HSPA8/HSC70 chaperone activity.

It is found in the cytoplasm. Its function is as follows. Acts as a nucleotide-exchange factor (NEF) for chaperone proteins HSPA1A and HSPA1B, promoting the release of ADP from HSPA1A/B thereby triggering substrate release. Prevents the aggregation of denatured proteins in cells under severe stress, on which the ATP levels decrease markedly. Inhibits HSPA8/HSC70 ATPase and chaperone activities. In Pongo abelii (Sumatran orangutan), this protein is Heat shock protein 105 kDa (HSPH1).